Reading from the N-terminus, the 300-residue chain is Cholesterol 25-hydroxylase-like protein (300 aa).

A glycan (N-linked (GlcNAc...) asparagine) is linked at N9. Transmembrane regions (helical) follow at residues 43–63 (LFPP…FTFI), 95–115 (LQGW…LIWV), and 130–152 (MVSQ…HYFN). The 132-residue stretch at 135-266 (AIFFLAFDFT…WFNYLDRLMG (132 aa)) folds into the Fatty acid hydroxylase domain. Residues 148–152 (FHYFN) carry the Histidine box-1 motif. The Histidine box-2 motif lies at 163-167 (HSVHH). A helical membrane pass occupies residues 180-200 (LHPFELFFVATFITTVPWIFP). The Histidine box-3 motif lies at 242-248 (AHDMHHL).

It belongs to the sterol desaturase family. It depends on Fe cation as a cofactor.

It localises to the membrane. Its function is as follows. Probable sterol desaturase. This is Cholesterol 25-hydroxylase-like protein from Caenorhabditis briggsae.